The sequence spans 294 residues: Foldase protein PrsA 1 (294 aa).

An N-terminal signal peptide occupies residues 1–21; sequence MTKLKKVMISLVAATLLLLAG. Cysteine 22 is lipidated: N-palmitoyl cysteine. Cysteine 22 carries S-diacylglycerol cysteine lipidation. One can recognise a PpiC domain in the interval 135–226; that stretch reads EPNITVRHIL…YGYHLIQLVK (92 aa).

The protein belongs to the PrsA family.

It is found in the cell membrane. The catalysed reaction is [protein]-peptidylproline (omega=180) = [protein]-peptidylproline (omega=0). Its function is as follows. Plays a major role in protein secretion by helping the post-translocational extracellular folding of several secreted proteins. The polypeptide is Foldase protein PrsA 1 (prsA1) (Listeria innocua serovar 6a (strain ATCC BAA-680 / CLIP 11262)).